Consider the following 155-residue polypeptide: Small ribosomal subunit protein uS7 (155 aa).

The protein belongs to the universal ribosomal protein uS7 family. Part of the 30S ribosomal subunit. Contacts proteins S9 and S11.

In terms of biological role, one of the primary rRNA binding proteins, it binds directly to 16S rRNA where it nucleates assembly of the head domain of the 30S subunit. Is located at the subunit interface close to the decoding center, probably blocks exit of the E-site tRNA. This chain is Small ribosomal subunit protein uS7, found in Sulfurovum sp. (strain NBC37-1).